A 172-amino-acid polypeptide reads, in one-letter code: Signal peptidase complex catalytic subunit SEC11 (172 aa).

Over 1–14 (MLSSLANPRQAASQ) the chain is Cytoplasmic. The helical; Signal-anchor for type II membrane protein transmembrane segment at 15–35 (LLNFALILSTAFMMWKGLSVV) threads the bilayer. At 36-172 (SDSPSPIVVV…MGLVVVLQRE (137 aa)) the chain is on the lumenal side. Active-site charge relay system residues include Ser-49, His-90, and Asp-115. Residues 158–169 (AMLGIMGLVVVL) are C-terminal short (CTS) helix.

This sequence belongs to the peptidase S26B family. As to quaternary structure, component of the signal peptidase complex (SPC) composed of a catalytic subunit SEC11 and three accessory subunits SPC1, SPC2 and SPC3. The complex induces a local thinning of the ER membrane which is used to measure the length of the signal peptide (SP) h-region of protein substrates. This ensures the selectivity of the complex towards h-regions shorter than 18-20 amino acids. SPC associates with the translocon complex.

It is found in the endoplasmic reticulum membrane. The catalysed reaction is Cleavage of hydrophobic, N-terminal signal or leader sequences from secreted and periplasmic proteins.. Its function is as follows. Catalytic component of the signal peptidase complex (SPC) which catalyzes the cleavage of N-terminal signal sequences from nascent proteins as they are translocated into the lumen of the endoplasmic reticulum. Specifically cleaves N-terminal signal peptides that contain a hydrophobic alpha-helix (h-region) shorter than 18-20 amino acids. This chain is Signal peptidase complex catalytic subunit SEC11 (SEC11), found in Colletotrichum graminicola (strain M1.001 / M2 / FGSC 10212) (Maize anthracnose fungus).